The sequence spans 1075 residues: mRNA-binding protein PUF2 (1075 aa).

Residues 38 to 68 (NTNARSVRVSDKRGRSSSTSPQKIGSYRTRA) are disordered. Residue Ser-72 is modified to Phosphoserine. Residues 93–105 (TPVVVVPPTSSTP) are compositionally biased toward low complexity. Residues 93 to 112 (TPVVVVPPTSSTPDSLNSTT) form a disordered region. Ser-198 carries the phosphoserine modification. The RRM domain maps to 316 to 402 (NTISISNVFP…APSTVSFARV (87 aa)). Residues 511–872 (ELNHLLQNAL…QLLEEVGLSS (362 aa)) form the PUM-HD domain. 6 Pumilio repeats span residues 574–611 (AIVMLDQLPELSSDYLGNTVIQKLFENSSNIIRDIMLR), 612–647 (KCNKYLTSMGVHKNGTWVCQKIIKMANTPRQINLVT), 649–683 (GVSDYCTPLFNDQFGNYVIQGILKFGFPWNSFIFE), 684–719 (SVLSHFWTIVQNRYGSRAVRACLEADSIITQCQLLT), 722–758 (SLIIVLSPYLATDTNGTLLITWLLDTCTLPNKNLILC), and 760–800 (KLVN…KIIH). 2 positions are modified to phosphoserine: Ser-872 and Ser-876. Disordered regions lie at residues 874 to 931 (GISP…LNFN) and 997 to 1075 (NNYN…SYGY). 3 stretches are compositionally biased toward low complexity: residues 901–916 (VSVSSVRSSNSRHNSV), 997–1009 (NNYNNSGYSSQMN), and 1018–1063 (NNNN…NNNN).

Its subcellular location is the cytoplasm. In terms of biological role, RNA-binding protein involved in post-transcriptional regulation. Negatively regulates expression of COX17 by binding to the 3'-UTR of COX17 mRNA. Promotes decay of COX17 mRNA by enhancing its rate of deadenylation and subsequent turnover. Predominantly binds to mRNAs encoding membrane-associated proteins with roles in transmembrane transport and vesicular trafficking. This is mRNA-binding protein PUF2 (PUF2) from Saccharomyces cerevisiae (strain ATCC 204508 / S288c) (Baker's yeast).